The following is a 638-amino-acid chain: 1-deoxy-D-xylulose-5-phosphate synthase (638 aa).

Thiamine diphosphate is bound by residues His72 and 113 to 115 (GHA). Asp144 is a Mg(2+) binding site. Residues 145–146 (GA), Asn174, Tyr287, and Glu370 each bind thiamine diphosphate. A Mg(2+)-binding site is contributed by Asn174.

It belongs to the transketolase family. DXPS subfamily. As to quaternary structure, homodimer. Mg(2+) serves as cofactor. Thiamine diphosphate is required as a cofactor.

It catalyses the reaction D-glyceraldehyde 3-phosphate + pyruvate + H(+) = 1-deoxy-D-xylulose 5-phosphate + CO2. Its pathway is metabolic intermediate biosynthesis; 1-deoxy-D-xylulose 5-phosphate biosynthesis; 1-deoxy-D-xylulose 5-phosphate from D-glyceraldehyde 3-phosphate and pyruvate: step 1/1. Its function is as follows. Catalyzes the acyloin condensation reaction between C atoms 2 and 3 of pyruvate and glyceraldehyde 3-phosphate to yield 1-deoxy-D-xylulose-5-phosphate (DXP). In Thermosynechococcus vestitus (strain NIES-2133 / IAM M-273 / BP-1), this protein is 1-deoxy-D-xylulose-5-phosphate synthase.